We begin with the raw amino-acid sequence, 1221 residues long: RNA exonuclease 1 homolog (1221 aa).

A compositionally biased stretch (gly residues) spans 37–46 (RGSGAPGDGG). A disordered region spans residues 37 to 75 (RGSGAPGDGGEAPPAAGLGYDPYNPELPKPPAQRENGTL). Residues 86-115 (LELELVNQAIEAVRSEVELEQRRYRELLET) are a coiled coil. Positions 116 to 598 (TREHRSAEAP…STSSAGADVD (483 aa)) are disordered. The residue at position 191 (arginine 191) is an Omega-N-methylarginine. Phosphoserine occurs at positions 287, 289, and 358. Residues 357 to 369 (ASPAQVQSSQDGG) show a composition bias toward low complexity. A compositionally biased stretch (basic and acidic residues) spans 393–417 (AQGKDKTKDKGRGRPVEKPRADKKG). 3 positions are modified to phosphoserine: serine 459, serine 499, and serine 526. The segment covering 492–501 (LVERKARSLD) has biased composition (basic and acidic residues). Residues 498 to 577 (RSLDEGASQD…KRLKASPPPS (80 aa)) form an interaction with ELOA region. Residues 580 to 593 (PSSSSSSSSSTSSA) show a composition bias toward low complexity. Serine 610 bears the Phosphoserine mark. Disordered stretches follow at residues 619–692 (IFNE…TAQE) and 735–775 (HIPN…TRTL). Over residues 627 to 648 (KTEDRGRLARQPPKEEKSEEKG) the composition is skewed to basic and acidic residues. A Phosphoserine modification is found at serine 914. The region spanning 1060–1209 (IYALDCEMSY…EDAGACMHLV (150 aa)) is the Exonuclease domain.

This sequence belongs to the REXO1/REXO3 family. Interacts with TCEA2 and ELOA. As to expression, ubiquitously expressed.

The protein localises to the nucleus. Seems to have no detectable effect on transcription elongation in vitro. In Homo sapiens (Human), this protein is RNA exonuclease 1 homolog (REXO1).